A 508-amino-acid chain; its full sequence is Protection of telomeres protein tpz1 (508 aa).

The segment at Ser-2–Glu-223 is pot1-binding. Disordered stretches follow at residues Gln-159–Asp-178, Val-235–Pro-269, and Pro-282–Arg-358. The span at Ser-327–Asp-347 shows a compositional bias: polar residues. Residues Ser-348–Arg-358 show a composition bias toward basic and acidic residues. The interval Thr-379–Ser-508 is ccq1/poz1-binding.

As to quaternary structure, interacts with ccq1, pot1 and poz1.

It is found in the chromosome. Its subcellular location is the telomere. The protein localises to the nucleus. Telomeric DNA-binding protein that is required to protect the 3'-end telomeric overhang and involved in telomere length regulation. recruits poz1 and ccq1 to telomeres, regulating telomere length negatively and positively respectively. In Schizosaccharomyces pombe (strain 972 / ATCC 24843) (Fission yeast), this protein is Protection of telomeres protein tpz1 (tpz1).